The chain runs to 481 residues: 7-deoxyloganetin glucosyltransferase (481 aa).

His-22 acts as the Proton acceptor in catalysis. His-22 contributes to the an anthocyanidin binding site. Asp-126 (charge relay) is an active-site residue. The UDP-alpha-D-glucose site is built by Thr-148, Gln-363, His-378, Trp-381, Asn-382, Ser-383, and Glu-386. Ala-401 contributes to the an anthocyanidin binding site. Residues Glu-402 and Gln-403 each coordinate UDP-alpha-D-glucose.

Belongs to the UDP-glycosyltransferase family. In terms of tissue distribution, ubiquitous. Very low expression in stems.

The catalysed reaction is 7-deoxyloganetin + UDP-alpha-D-glucose = 7-deoxyloganin + UDP + H(+). In terms of biological role, iridoid glucosyltransferase acting on genipin and 7-deoxyloganetin. No activity with 7-deoxyloganetic acid. Involved in geniposide biosynthesis. The chain is 7-deoxyloganetin glucosyltransferase (UGT85A24) from Gardenia jasminoides (Cape jasmine).